The sequence spans 684 residues: DNA ligase (684 aa).

NAD(+) contacts are provided by residues 34 to 38 (DFQYD), 83 to 84 (SL), and glutamate 117. The active-site N6-AMP-lysine intermediate is the lysine 119. NAD(+) contacts are provided by arginine 140, glutamate 186, lysine 300, and lysine 324. Zn(2+) is bound by residues cysteine 418, cysteine 421, cysteine 436, and cysteine 442. The BRCT domain occupies 601–684 (PVNLNFDGMK…EMLGEVGSNE (84 aa)).

It belongs to the NAD-dependent DNA ligase family. LigA subfamily. Requires Mg(2+) as cofactor. It depends on Mn(2+) as a cofactor.

The catalysed reaction is NAD(+) + (deoxyribonucleotide)n-3'-hydroxyl + 5'-phospho-(deoxyribonucleotide)m = (deoxyribonucleotide)n+m + AMP + beta-nicotinamide D-nucleotide.. DNA ligase that catalyzes the formation of phosphodiester linkages between 5'-phosphoryl and 3'-hydroxyl groups in double-stranded DNA using NAD as a coenzyme and as the energy source for the reaction. It is essential for DNA replication and repair of damaged DNA. The sequence is that of DNA ligase from Chlorobium phaeobacteroides (strain BS1).